The sequence spans 185 residues: MTTIVSVRRGDKVVIGGDGQVSLGNTVMKGNARKVRRLYHDKVLAGFAGGTADAFTLFERFESKLEQHQGNLMRAAVELAKDWRTDRALRRLEALLAVADKETSLIITGNGDVVQPENDLIAIGSGGPFAQSAARALLENTDLNARDIVQKALTIAGDICVYTNGNQTIEEEESIAEDKTKQGKK.

The active site involves T2. Na(+)-binding residues include G157, C160, and T163.

It belongs to the peptidase T1B family. HslV subfamily. In terms of assembly, a double ring-shaped homohexamer of HslV is capped on each side by a ring-shaped HslU homohexamer. The assembly of the HslU/HslV complex is dependent on binding of ATP.

The protein localises to the cytoplasm. The catalysed reaction is ATP-dependent cleavage of peptide bonds with broad specificity.. Its activity is regulated as follows. Allosterically activated by HslU binding. In terms of biological role, protease subunit of a proteasome-like degradation complex believed to be a general protein degrading machinery. This is ATP-dependent protease subunit HslV from Idiomarina loihiensis (strain ATCC BAA-735 / DSM 15497 / L2-TR).